The following is a 382-amino-acid chain: Chaperone protein DnaJ (382 aa).

In terms of domain architecture, J spans 5–70; the sequence is DYYDLLGLSK…DKRAAYDRYG (66 aa). A CR-type zinc finger spans residues 138 to 216; it reads GTKVPINYVT…CSGSGRVRDE (79 aa). Residues Cys-151, Cys-154, Cys-168, Cys-171, Cys-190, Cys-193, Cys-204, and Cys-207 each coordinate Zn(2+). CXXCXGXG motif repeat units lie at residues 151–158, 168–175, 190–197, and 204–211; these read CSSCSGSG, CNTCHGAG, CHVCNGEG, and CKKCSGSG.

Belongs to the DnaJ family. In terms of assembly, homodimer. Requires Zn(2+) as cofactor.

It localises to the cytoplasm. Participates actively in the response to hyperosmotic and heat shock by preventing the aggregation of stress-denatured proteins and by disaggregating proteins, also in an autonomous, DnaK-independent fashion. Unfolded proteins bind initially to DnaJ; upon interaction with the DnaJ-bound protein, DnaK hydrolyzes its bound ATP, resulting in the formation of a stable complex. GrpE releases ADP from DnaK; ATP binding to DnaK triggers the release of the substrate protein, thus completing the reaction cycle. Several rounds of ATP-dependent interactions between DnaJ, DnaK and GrpE are required for fully efficient folding. Also involved, together with DnaK and GrpE, in the DNA replication of plasmids through activation of initiation proteins. In Ehrlichia ruminantium (strain Gardel), this protein is Chaperone protein DnaJ.